The following is a 380-amino-acid chain: Chaperone protein DnaJ (380 aa).

Residues 4–69 (DYYEILGVTR…QKRAAYDRFG (66 aa)) enclose the J domain. Residues 135–213 (GKTAQINIPS…CQGTRRVEKN (79 aa)) form a CR-type zinc finger. Residues Cys148, Cys151, Cys165, Cys168, Cys187, Cys190, Cys201, and Cys204 each coordinate Zn(2+). CXXCXGXG motif repeat units follow at residues 148-155 (CDSCEGSG), 165-172 (CGTCHGAG), 187-194 (CHACNGRG), and 201-208 (CPKCQGTR).

Belongs to the DnaJ family. Homodimer. Requires Zn(2+) as cofactor.

Its subcellular location is the cytoplasm. In terms of biological role, participates actively in the response to hyperosmotic and heat shock by preventing the aggregation of stress-denatured proteins and by disaggregating proteins, also in an autonomous, DnaK-independent fashion. Unfolded proteins bind initially to DnaJ; upon interaction with the DnaJ-bound protein, DnaK hydrolyzes its bound ATP, resulting in the formation of a stable complex. GrpE releases ADP from DnaK; ATP binding to DnaK triggers the release of the substrate protein, thus completing the reaction cycle. Several rounds of ATP-dependent interactions between DnaJ, DnaK and GrpE are required for fully efficient folding. Also involved, together with DnaK and GrpE, in the DNA replication of plasmids through activation of initiation proteins. In Bartonella quintana (strain Toulouse) (Rochalimaea quintana), this protein is Chaperone protein DnaJ.